A 488-amino-acid chain; its full sequence is Receptor-like tyrosine-protein kinase kin-15 (488 aa).

Residues 1–26 (MCLKMRYERIKYILLFSLMHLVYSNS) form the signal peptide. A glycan (N-linked (GlcNAc...) asparagine) is linked at asparagine 25. Topologically, residues 27–50 (TFESFTENPHISSQISNVLYMDQM) are extracellular. The helical transmembrane segment at 51–70 (FIIYILICILLILISVIVYL) threads the bilayer. Topologically, residues 71–488 (SKRYSQQMMQ…SKLEDWIRRD (418 aa)) are cytoplasmic. In terms of domain architecture, Protein kinase spans 144–458 (EISEDKLGSG…VEFFEEHLSV (315 aa)). Residues 150 to 158 (LGSGFFGEV) and lysine 183 each bind ATP. Aspartate 319 (proton acceptor) is an active-site residue.

This sequence belongs to the protein kinase superfamily. Tyr protein kinase family. Hypodermal cells.

Its subcellular location is the cell membrane. The enzyme catalyses L-tyrosyl-[protein] + ATP = O-phospho-L-tyrosyl-[protein] + ADP + H(+). Its function is as follows. May be specifically involved in cell-cell interactions regulating cell fusions that generate the hypodermis during postembryonic development. It has a role in the development of the HYP7 hypodermal syncytium. This is Receptor-like tyrosine-protein kinase kin-15 (kin-15) from Caenorhabditis elegans.